Reading from the N-terminus, the 546-residue chain is Chaperonin GroEL 1 (546 aa).

Residues Thr30–Pro33, Lys51, Asp87–Thr91, Gly415, Asn479–Ala481, and Asp495 contribute to the ATP site.

The protein belongs to the chaperonin (HSP60) family. In terms of assembly, forms a cylinder of 14 subunits composed of two heptameric rings stacked back-to-back. Interacts with the co-chaperonin GroES.

It localises to the cytoplasm. It carries out the reaction ATP + H2O + a folded polypeptide = ADP + phosphate + an unfolded polypeptide.. In terms of biological role, together with its co-chaperonin GroES, plays an essential role in assisting protein folding. The GroEL-GroES system forms a nano-cage that allows encapsulation of the non-native substrate proteins and provides a physical environment optimized to promote and accelerate protein folding. The chain is Chaperonin GroEL 1 from Vibrio vulnificus (strain CMCP6).